Reading from the N-terminus, the 122-residue chain is Large ribosomal subunit protein uL14 (122 aa).

Belongs to the universal ribosomal protein uL14 family. In terms of assembly, part of the 50S ribosomal subunit. Forms a cluster with proteins L3 and L19. In the 70S ribosome, L14 and L19 interact and together make contacts with the 16S rRNA in bridges B5 and B8.

Binds to 23S rRNA. Forms part of two intersubunit bridges in the 70S ribosome. This is Large ribosomal subunit protein uL14 from Helicobacter hepaticus (strain ATCC 51449 / 3B1).